We begin with the raw amino-acid sequence, 116 residues long: Large ribosomal subunit protein P2 (116 aa).

A disordered region spans residues 60 to 116; it reads GKLSSMPSGGGVAAAAGGGGAAAGGGGAAPAAEEKKEEKKEESEEESDDDMGFGLFD. Over residues 67-87 the composition is skewed to gly residues; it reads SGGGVAAAAGGGGAAAGGGGA. The span at 91–101 shows a compositional bias: basic and acidic residues; the sequence is AEEKKEEKKEE.

The protein belongs to the eukaryotic ribosomal protein P1/P2 family. In terms of assembly, P1 and P2 exist as dimers at the large ribosomal subunit. In terms of processing, phosphorylated.

In terms of biological role, plays an important role in the elongation step of protein synthesis. In Branchiostoma floridae (Florida lancelet), this protein is Large ribosomal subunit protein P2.